Here is a 240-residue protein sequence, read N- to C-terminus: Uridylate kinase (240 aa).

12-15 contributes to the ATP binding site; the sequence is KLSG. Residues 20–25 form an involved in allosteric activation by GTP region; it reads GEQGNG. Glycine 54 contacts UMP. ATP contacts are provided by glycine 55 and arginine 59. UMP contacts are provided by residues aspartate 74 and 135-142; that span reads TGNPYFST. Positions 163, 169, and 172 each coordinate ATP.

Belongs to the UMP kinase family. As to quaternary structure, homohexamer. Interacts with BrxC.

It is found in the cytoplasm. It carries out the reaction UMP + ATP = UDP + ADP. Its pathway is pyrimidine metabolism; CTP biosynthesis via de novo pathway; UDP from UMP (UMPK route): step 1/1. Its activity is regulated as follows. Allosterically activated by GTP. Can also be activated by dGTP and 3'-anthraniloyl-2'-deoxyguanosine-5'-triphosphate (Ant-dGTP). Inhibited by UTP, 5-bromo-UTP and 5-iodo-UTP. Functionally, catalyzes the reversible phosphorylation of UMP to UDP, with ATP or dATP as the most efficient phosphate donors. Is also able to phosphorylate 5-fluoro-UMP and 6-aza-UMP. This is Uridylate kinase (pyrH) from Bacillus subtilis (strain 168).